The sequence spans 154 residues: MSNQMNTMDIKEILKYLPHRYPFLLIDRVLDYTPGVSLQAIKNVSINEPFFQGHFPIQPVMPGVLILEAMAQATGLLAFKTMSSDVPPPGVLYYFAGIDNARFRRVVEPGDQIHFDVKMIKERRGIGVFYGEAKVDGEVVCSAEIMCARREISQ.

Residue His54 is part of the active site.

Belongs to the thioester dehydratase family. FabZ subfamily.

The protein resides in the cytoplasm. The enzyme catalyses a (3R)-hydroxyacyl-[ACP] = a (2E)-enoyl-[ACP] + H2O. Involved in unsaturated fatty acids biosynthesis. Catalyzes the dehydration of short chain beta-hydroxyacyl-ACPs and long chain saturated and unsaturated beta-hydroxyacyl-ACPs. This is 3-hydroxyacyl-[acyl-carrier-protein] dehydratase FabZ from Shewanella baltica (strain OS223).